We begin with the raw amino-acid sequence, 147 residues long: Hemoglobin subunit beta (147 aa).

At Val2 the chain carries N-acetylvaline. The Globin domain maps to 3–147 (NLSGDEKNAV…VANALAHRYH (145 aa)). Position 45 is a phosphoserine (Ser45). The residue at position 60 (Lys60) is an N6-acetyllysine. Heme b is bound at residue His64. Lys83 carries the post-translational modification N6-acetyllysine. His93 is a binding site for heme b. Cys94 is modified (S-nitrosocysteine).

It belongs to the globin family. Heterotetramer of two alpha chains and two beta chains. Red blood cells.

Its function is as follows. Involved in oxygen transport from the lung to the various peripheral tissues. This chain is Hemoglobin subunit beta (HBB), found in Vicugna pacos (Alpaca).